The following is a 257-amino-acid chain: Receptor expression-enhancing protein 4 (257 aa).

2 helical membrane-spanning segments follow: residues methionine 1–tyrosine 21 and tryptophan 42–phenylalanine 62. Serine 152 and serine 194 each carry phosphoserine. The interval proline 183–serine 257 is disordered. Phosphothreonine is present on threonine 196. A Phosphoserine modification is found at serine 202. Phosphothreonine is present on threonine 250. Phosphoserine is present on serine 253.

It belongs to the DP1 family. As to expression, expressed in circumvallate papillae and testis.

Its subcellular location is the endoplasmic reticulum membrane. In terms of biological role, microtubule-binding protein required to ensure proper cell division and nuclear envelope reassembly by sequestering the endoplasmic reticulum away from chromosomes during mitosis. Probably acts by clearing the endoplasmic reticulum membrane from metaphase chromosomes. This Homo sapiens (Human) protein is Receptor expression-enhancing protein 4 (REEP4).